Reading from the N-terminus, the 423-residue chain is Aspartate--tRNA(Asp) ligase (423 aa).

Residue Glu163 coordinates L-aspartate. The segment at 185–188 is aspartate; it reads QLYK. L-aspartate is bound at residue Arg207. Residues 207 to 209, 215 to 217, and Glu346 each bind ATP; these read RAE and RHL. 2 residues coordinate Mg(2+): Glu346 and Ser349. L-aspartate contacts are provided by Ser349 and Arg353. 394 to 397 is an ATP binding site; sequence GLER.

The protein belongs to the class-II aminoacyl-tRNA synthetase family. Type 2 subfamily. Homodimer. Requires Mg(2+) as cofactor.

It is found in the cytoplasm. The catalysed reaction is tRNA(Asp) + L-aspartate + ATP = L-aspartyl-tRNA(Asp) + AMP + diphosphate. In terms of biological role, catalyzes the attachment of L-aspartate to tRNA(Asp) in a two-step reaction: L-aspartate is first activated by ATP to form Asp-AMP and then transferred to the acceptor end of tRNA(Asp). This Picrophilus torridus (strain ATCC 700027 / DSM 9790 / JCM 10055 / NBRC 100828 / KAW 2/3) protein is Aspartate--tRNA(Asp) ligase.